A 690-amino-acid chain; its full sequence is Elongation factor G (690 aa).

A tr-type G domain is found at 8 to 283 (EDYRNFGIMA…AVVDYLPSPL (276 aa)). Residues 17–24 (AHIDAGKT), 81–85 (DTPGH), and 135–138 (NKMD) each bind GTP.

This sequence belongs to the TRAFAC class translation factor GTPase superfamily. Classic translation factor GTPase family. EF-G/EF-2 subfamily.

It is found in the cytoplasm. In terms of biological role, catalyzes the GTP-dependent ribosomal translocation step during translation elongation. During this step, the ribosome changes from the pre-translocational (PRE) to the post-translocational (POST) state as the newly formed A-site-bound peptidyl-tRNA and P-site-bound deacylated tRNA move to the P and E sites, respectively. Catalyzes the coordinated movement of the two tRNA molecules, the mRNA and conformational changes in the ribosome. This is Elongation factor G from Rhodopseudomonas palustris (strain ATCC BAA-98 / CGA009).